Here is a 417-residue protein sequence, read N- to C-terminus: Calreticulin (417 aa).

A signal peptide spans 1-17 (MLLPVPLLLGLVGLAAA). An N-domain region spans residues 18-197 (EPTIYFKEQF…NSQVESGSLE (180 aa)). The Ca(2+) site is built by glutamine 26, lysine 62, and lysine 64. Residue lysine 64 is modified to N6-(2-hydroxyisobutyryl)lysine. An alpha-D-glucoside contacts are provided by tyrosine 109, lysine 111, tyrosine 128, and aspartate 135. Cysteine 137 and cysteine 163 are disulfide-bonded. Lysine 159 is modified (N6-acetyllysine). The 1-1 repeat unit spans residues 191–202 (VESGSLEDDWDF). The tract at residues 191-255 (VESGSLEDDW…DAKKPEDWDE (65 aa)) is 4 X approximate repeats. Residues 193-277 (SGSLEDDWDF…NPEYKGEWKP (85 aa)) form a disordered region. The tract at residues 198–308 (DDWDFLPPKK…YSPDSNIYAY (111 aa)) is P-domain. Positions 207 to 251 (KIKDPDAVKPEDWDERAKIDDPTDSKPEDWDKPEHIPDPDAKKPE) are enriched in basic and acidic residues. Residue lysine 209 is modified to N6-acetyllysine. A run of 6 repeats spans residues 210-221 (DPDAVKPEDWDE), 227-238 (DPTDSKPEDWDK), 244-255 (DPDAKKPEDWDE), 259-269 (GEWEPPVIQNP), 273-283 (GEWKPRQIDNP), and 287-297 (GTWIHPEIDNP). Residues 237–270 (DKPEHIPDPDAKKPEDWDEEMDGEWEPPVIQNPE) are interaction with PPIB. Positions 252 to 261 (DWDEEMDGEW) are enriched in acidic residues. The segment at 259-297 (GEWEPPVIQNPEYKGEWKPRQIDNPDYKGTWIHPEIDNP) is 3 X approximate repeats. A C-domain region spans residues 309 to 417 (ENFAVLGLDL…AAAGQAKDEL (109 aa)). Aspartate 317 contributes to the an alpha-D-glucoside binding site. Aspartate 328 contributes to the Ca(2+) binding site. Residues 350–417 (TKAAEKQMKD…AAAGQAKDEL (68 aa)) are disordered. The segment covering 352–379 (AAEKQMKDKQDEEQRLKEEEEEKKRKEE) has biased composition (basic and acidic residues). Acidic residues predominate over residues 380 to 408 (EEVDKEDEEDKDEDEEEEDEKEEEEEEDA). A Prevents secretion from ER motif is present at residues 414-417 (KDEL).

It belongs to the calreticulin family. Monomer. Component of an EIF2 complex at least composed of CELF1/CUGBP1, CALR, CALR3, EIF2S1, EIF2S2, HSP90B1 and HSPA5. Interacts with PDIA3/ERp57 and SPACA9. Interacts with TRIM21. Interacts with NR3C1. Interacts with PPIB. Interacts (via P-domain) with PDIA5. Interacts with CLCC1. As to expression, in blastocyst expressed in all blastomeres (at protein level). In embryos, expressed in spleen, kidney, liver, fat, muscle, ovary, granulosa cells and cumulus cells.

It is found in the endoplasmic reticulum lumen. Its subcellular location is the cytoplasm. The protein localises to the cytosol. It localises to the secreted. The protein resides in the extracellular space. It is found in the extracellular matrix. Its subcellular location is the cell surface. The protein localises to the sarcoplasmic reticulum lumen. It localises to the cytoplasmic vesicle. The protein resides in the secretory vesicle. It is found in the cortical granule. Its subcellular location is the cytolytic granule. Calcium-binding chaperone that promotes folding, oligomeric assembly and quality control in the endoplasmic reticulum (ER) via the calreticulin/calnexin cycle. This lectin interacts transiently with almost all of the monoglucosylated glycoproteins that are synthesized in the ER. Interacts with the DNA-binding domain of NR3C1 and mediates its nuclear export. Involved in maternal gene expression regulation. May participate in oocyte maturation via the regulation of calcium homeostasis. Present in the cortical granules of non-activated oocytes, is exocytosed during the cortical reaction in response to oocyte activation and might participate in the block to polyspermy. This is Calreticulin (CALR) from Sus scrofa (Pig).